The following is a 470-amino-acid chain: 6-phospho-beta-galactosidase (470 aa).

D-galactose 6-phosphate is bound by residues Gln-19, His-116, Asn-159, Glu-160, and Asn-297. Catalysis depends on Glu-160, which acts as the Proton donor. Residue Glu-375 is the Nucleophile of the active site. Ser-430, Trp-431, Lys-437, and Tyr-439 together coordinate D-galactose 6-phosphate.

Belongs to the glycosyl hydrolase 1 family.

The enzyme catalyses a 6-phospho-beta-D-galactoside + H2O = D-galactose 6-phosphate + an alcohol. The protein operates within carbohydrate metabolism; lactose degradation; D-galactose 6-phosphate and beta-D-glucose from lactose 6-phosphate: step 1/1. This chain is 6-phospho-beta-galactosidase, found in Staphylococcus aureus (strain MRSA252).